The primary structure comprises 529 residues: Potassium voltage-gated channel subfamily A member 6 (529 aa).

A disordered region spans residues Met-1 to Gly-33. Residues Met-1–Gly-171 lie on the Cytoplasmic side of the membrane. Position 3 is a phosphoserine (Ser-3). Residues Pro-172–Leu-193 traverse the membrane as a helical segment. At Glu-194–Pro-262 the chain is on the extracellular side. The segment covering Gly-210 to Gly-220 has biased composition (low complexity). The segment at Gly-210 to Thr-233 is disordered. The helical transmembrane segment at Phe-263–Ala-284 threads the bilayer. Cys-285 carries the S-palmitoyl cysteine lipid modification. Residues Cys-285–Ile-295 are Cytoplasmic-facing. Residues Met-296–Val-316 form a helical membrane-spanning segment. Over Gln-317–Ser-337 the chain is Extracellular. Residues Leu-338–His-358 form a helical; Voltage-sensor membrane-spanning segment. Residues Ser-359 to Met-373 are Cytoplasmic-facing. Residues Lys-360–Met-373 are S4-S5 linker. The helical transmembrane segment at Arg-374–Tyr-395 threads the bilayer. At Phe-396 to Ile-409 the chain is on the extracellular side. The segment at residues Pro-410–Thr-421 is an intramembrane region (helical). Residues Thr-422–Asp-427 carry the Selectivity filter motif. An intramembrane segment occupies Thr-422–Tyr-429. At Pro-430–Lys-436 the chain is on the extracellular side. A helical transmembrane segment spans residues Ile-437–Tyr-465. Over His-466–Val-529 the chain is Cytoplasmic. The segment at Asp-488–Leu-513 is disordered. Residues Asp-500 to Pro-510 are compositionally biased toward basic and acidic residues. The residue at position 511 (Ser-511) is a Phosphoserine; by PKA. The PDZ-binding motif lies at Thr-527–Val-529.

The protein belongs to the potassium channel family. A (Shaker) (TC 1.A.1.2) subfamily. Kv1.6/KCNA6 sub-subfamily. In terms of assembly, homotetramer and heterotetramer of potassium channel proteins. Interacts with KCNAB1 and KCNAB2.

It localises to the cell membrane. The catalysed reaction is K(+)(in) = K(+)(out). Functionally, voltage-gated potassium channel that mediates transmembrane potassium transport in excitable membranes. Forms tetrameric potassium-selective channels through which potassium ions pass in accordance with their electrochemical gradient. The channel alternates between opened and closed conformations in response to the voltage difference across the membrane. Can form functional homotetrameric channels and heterotetrameric channels that contain variable proportions of KCNA1, KCNA2, KCNA4, KCNA6, and possibly other family members as well; channel properties depend on the type of alpha subunits that are part of the channel. Channel properties are modulated by cytoplasmic beta subunits that regulate the subcellular location of the alpha subunits and promote rapid inactivation. Homotetrameric channels display rapid activation and slow inactivation. The chain is Potassium voltage-gated channel subfamily A member 6 (KCNA6) from Homo sapiens (Human).